A 116-amino-acid chain; its full sequence is Large ribosomal subunit protein bL19 (116 aa).

Belongs to the bacterial ribosomal protein bL19 family.

Its function is as follows. This protein is located at the 30S-50S ribosomal subunit interface and may play a role in the structure and function of the aminoacyl-tRNA binding site. The polypeptide is Large ribosomal subunit protein bL19 (Staphylococcus saprophyticus subsp. saprophyticus (strain ATCC 15305 / DSM 20229 / NCIMB 8711 / NCTC 7292 / S-41)).